Consider the following 61-residue polypeptide: [Thr6, Val10, Asp11]-phyllokinin (61 aa).

Positions 1-22 (MSFLKKSLFLVLFLGLVSFSIC) are cleaved as a signal peptide. The propeptide occupies 23–50 (EEEKRETEEEENEDEMNEESEEKRESPE). The tract at residues 24 to 61 (EEKRETEEEENEDEMNEESEEKRESPERPPGFTPFRVD) is disordered. The span at 30–42 (EEEENEDEMNEES) shows a compositional bias: acidic residues.

It belongs to the frog skin active peptide (FSAP) family. Bradykinin-related peptide subfamily. Expressed by the skin glands.

It is found in the secreted. Its function is as follows. Induces relaxation of rat smooth muscle from tail artery and contraction of that from ileum, urinary bladder and uterus. Binds to both bradykinin receptor B1 (BDKRB1) and B2 (BDKRB2). The polypeptide is [Thr6, Val10, Asp11]-phyllokinin (Agalychnis spurrelli (Gliding leaf frog)).